A 196-amino-acid polypeptide reads, in one-letter code: SPRY domain-containing protein 7 (196 aa).

The residue at position 2 (Ala2) is an N-acetylalanine. The B30.2/SPRY domain occupies 2 to 184 (AASVFCCLRC…FSEFYHTPPP (183 aa)).

This chain is SPRY domain-containing protein 7 (SPRYD7), found in Bos taurus (Bovine).